The chain runs to 348 residues: Erlin-1 (348 aa).

Residues 1 to 7 (MNMTQAR) are Cytoplasmic-facing. Residues 8-28 (VLVAAVVGLVAVLLYASIHKI) form a helical membrane-spanning segment. The Lumenal segment spans residues 29-348 (EEGHLAVYYR…NLIQNKESTG (320 aa)). N108 carries an N-linked (GlcNAc...) asparagine glycan. Position 269 is an N6-acetyllysine (K269). Basic and acidic residues predominate over residues 321–333 (TGRESSHPSKEAL). A disordered region spans residues 321 to 348 (TGRESSHPSKEALEPSGENLIQNKESTG). Polar residues predominate over residues 339 to 348 (NLIQNKESTG).

The protein belongs to the band 7/mec-2 family. Forms a heteromeric complex with ERLIN2. In complex with ERLIN2, interacts with RNF170. Interacts with AMFR and SYVN1. In terms of processing, deubiquitinated by USP25; leading to stabilization.

It is found in the endoplasmic reticulum membrane. Its function is as follows. Component of the ERLIN1/ERLIN2 complex which mediates the endoplasmic reticulum-associated degradation (ERAD) of inositol 1,4,5-trisphosphate receptors (IP3Rs). Involved in regulation of cellular cholesterol homeostasis by regulation the SREBP signaling pathway. Binds cholesterol and may promote ER retention of the SCAP-SREBF complex. This chain is Erlin-1, found in Pongo abelii (Sumatran orangutan).